The chain runs to 156 residues: ATP synthase subunit b (156 aa).

A helical membrane pass occupies residues isoleucine 12–alanine 32.

Belongs to the ATPase B chain family. F-type ATPases have 2 components, F(1) - the catalytic core - and F(0) - the membrane proton channel. F(1) has five subunits: alpha(3), beta(3), gamma(1), delta(1), epsilon(1). F(0) has three main subunits: a(1), b(2) and c(10-14). The alpha and beta chains form an alternating ring which encloses part of the gamma chain. F(1) is attached to F(0) by a central stalk formed by the gamma and epsilon chains, while a peripheral stalk is formed by the delta and b chains.

Its subcellular location is the cell inner membrane. Functionally, f(1)F(0) ATP synthase produces ATP from ADP in the presence of a proton or sodium gradient. F-type ATPases consist of two structural domains, F(1) containing the extramembraneous catalytic core and F(0) containing the membrane proton channel, linked together by a central stalk and a peripheral stalk. During catalysis, ATP synthesis in the catalytic domain of F(1) is coupled via a rotary mechanism of the central stalk subunits to proton translocation. Its function is as follows. Component of the F(0) channel, it forms part of the peripheral stalk, linking F(1) to F(0). The chain is ATP synthase subunit b from Marinobacter nauticus (strain ATCC 700491 / DSM 11845 / VT8) (Marinobacter aquaeolei).